The sequence spans 449 residues: Ribulose bisphosphate carboxylase large chain (449 aa).

The propeptide occupies 1–2; it reads MS. The residue at position 3 (Pro-3) is an N-acetylproline. Lys-14 is modified (N6,N6,N6-trimethyllysine). Substrate is bound by residues Asn-123 and Thr-173. Catalysis depends on Lys-175, which acts as the Proton acceptor. A substrate-binding site is contributed by Lys-177. Lys-201, Asp-203, and Glu-204 together coordinate Mg(2+). The residue at position 201 (Lys-201) is an N6-carboxylysine. The active-site Proton acceptor is His-294. Substrate contacts are provided by Arg-295, His-327, and Ser-379.

This sequence belongs to the RuBisCO large chain family. Type I subfamily. In terms of assembly, heterohexadecamer of 8 large chains and 8 small chains; disulfide-linked. The disulfide link is formed within the large subunit homodimers. The cofactor is Mg(2+). Post-translationally, the disulfide bond which can form in the large chain dimeric partners within the hexadecamer appears to be associated with oxidative stress and protein turnover.

Its subcellular location is the plastid. The protein resides in the chloroplast. It carries out the reaction 2 (2R)-3-phosphoglycerate + 2 H(+) = D-ribulose 1,5-bisphosphate + CO2 + H2O. It catalyses the reaction D-ribulose 1,5-bisphosphate + O2 = 2-phosphoglycolate + (2R)-3-phosphoglycerate + 2 H(+). Functionally, ruBisCO catalyzes two reactions: the carboxylation of D-ribulose 1,5-bisphosphate, the primary event in carbon dioxide fixation, as well as the oxidative fragmentation of the pentose substrate in the photorespiration process. Both reactions occur simultaneously and in competition at the same active site. The chain is Ribulose bisphosphate carboxylase large chain from Hippocratea richardiana.